The sequence spans 100 residues: Urease subunit gamma (100 aa).

It belongs to the urease gamma subunit family. As to quaternary structure, heterotrimer of UreA (gamma), UreB (beta) and UreC (alpha) subunits. Three heterotrimers associate to form the active enzyme.

The protein resides in the cytoplasm. It carries out the reaction urea + 2 H2O + H(+) = hydrogencarbonate + 2 NH4(+). The protein operates within nitrogen metabolism; urea degradation; CO(2) and NH(3) from urea (urease route): step 1/1. The polypeptide is Urease subunit gamma (Photorhabdus laumondii subsp. laumondii (strain DSM 15139 / CIP 105565 / TT01) (Photorhabdus luminescens subsp. laumondii)).